The chain runs to 166 residues: MITVATAECFTLGKIGTTIHKIASGYEECKNHRYYNIINGNVKIISSSFIPSIEGAEKLLNLGAPLPKCDYEYSYSKAYTEKNDLKVAHILAKGLKNSLNCNIAIATTAGVGRGGICIISDKNEYLFTTDIEGDLISKKNIIQRQKNGIDKTINKFVEILKKEYFL.

This sequence belongs to the UPF0254 family.

This Methanococcus aeolicus (strain ATCC BAA-1280 / DSM 17508 / OCM 812 / Nankai-3) protein is UPF0254 protein Maeo_0668.